We begin with the raw amino-acid sequence, 271 residues long: Malonyl-[acyl-carrier protein] O-methyltransferase (271 aa).

Belongs to the methyltransferase superfamily.

It catalyses the reaction malonyl-[ACP] + S-adenosyl-L-methionine = malonyl-[ACP] methyl ester + S-adenosyl-L-homocysteine. It participates in cofactor biosynthesis; biotin biosynthesis. Its function is as follows. Converts the free carboxyl group of a malonyl-thioester to its methyl ester by transfer of a methyl group from S-adenosyl-L-methionine (SAM). It allows to synthesize pimeloyl-ACP via the fatty acid synthetic pathway. In Halalkalibacterium halodurans (strain ATCC BAA-125 / DSM 18197 / FERM 7344 / JCM 9153 / C-125) (Bacillus halodurans), this protein is Malonyl-[acyl-carrier protein] O-methyltransferase.